The following is a 215-amino-acid chain: MTALPSSAPPLLAAHALTYSRNAIPILGPLHFHINPGEALIVQGPNGIGKTTLLRILAGLLHSDSGHIHINTHHNTTAPERTRHIAYLSHLPGLKQDLSALENLHFLNALHGCHPQRTPSNALTIVGLTDHAQTLVRQLSAGQKKRLSLARLWLSPAPLWLLDEPYANLDPEGITLLNHILTTHLHTQGGTLLTTPGALPTLPVPTRLLHLQKAP.

Positions 12–215 constitute an ABC transporter domain; the sequence is LAAHALTYSR…TRLLHLQKAP (204 aa). Position 44–51 (44–51) interacts with ATP; the sequence is GPNGIGKT.

This sequence belongs to the ABC transporter superfamily. CcmA exporter (TC 3.A.1.107) family. In terms of assembly, the complex is composed of two ATP-binding proteins (CcmA) and two transmembrane proteins (CcmB).

The protein localises to the cell inner membrane. The enzyme catalyses heme b(in) + ATP + H2O = heme b(out) + ADP + phosphate + H(+). Its function is as follows. Part of the ABC transporter complex CcmAB involved in the biogenesis of c-type cytochromes; once thought to export heme, this seems not to be the case, but its exact role is uncertain. Responsible for energy coupling to the transport system. The protein is Cytochrome c biogenesis ATP-binding export protein CcmA of Xylella fastidiosa (strain Temecula1 / ATCC 700964).